The sequence spans 382 residues: UDP-4-amino-4-deoxy-L-arabinose--oxoglutarate aminotransferase (382 aa).

An N6-(pyridoxal phosphate)lysine modification is found at Lys-183.

The protein belongs to the DegT/DnrJ/EryC1 family. ArnB subfamily. As to quaternary structure, homodimer. The cofactor is pyridoxal 5'-phosphate.

It carries out the reaction UDP-4-amino-4-deoxy-beta-L-arabinose + 2-oxoglutarate = UDP-beta-L-threo-pentopyranos-4-ulose + L-glutamate. Its pathway is nucleotide-sugar biosynthesis; UDP-4-deoxy-4-formamido-beta-L-arabinose biosynthesis; UDP-4-deoxy-4-formamido-beta-L-arabinose from UDP-alpha-D-glucuronate: step 2/3. The protein operates within bacterial outer membrane biogenesis; lipopolysaccharide biosynthesis. Functionally, catalyzes the conversion of UDP-4-keto-arabinose (UDP-Ara4O) to UDP-4-amino-4-deoxy-L-arabinose (UDP-L-Ara4N). The modified arabinose is attached to lipid A and is required for resistance to polymyxin and cationic antimicrobial peptides. The protein is UDP-4-amino-4-deoxy-L-arabinose--oxoglutarate aminotransferase of Pseudomonas syringae pv. syringae (strain B728a).